A 330-amino-acid polypeptide reads, in one-letter code: WRKY transcription factor WRKY51 (330 aa).

The disordered stretch occupies residues 39–61; that stretch reads QTGTSERSPAPAPAQEQQQQQQV. The span at 51–60 shows a compositional bias: low complexity; the sequence is PAQEQQQQQQ. The Nuclear localization signal motif lies at 74-81; that stretch reads FKKVISML. 2 disordered regions span residues 91–117 and 302–330; these read RGPVVAQSSGPAASEPAPVRSSPSAVS and YEGEHRHTPSAAGQDHPPAPPPPLALPLA. Low complexity predominate over residues 101–117; sequence PAASEPAPVRSSPSAVS. Positions 245-311 form a DNA-binding region, WRKY; the sequence is KVADIPADDF…YEGEHRHTPS (67 aa). A compositionally biased stretch (pro residues) spans 318–330; the sequence is PPAPPPPLALPLA.

The protein belongs to the WRKY group II-a family. Highly expressed in aleurone cells. In seeds, predominantly present in the plumule, radicle and scutellum of the embryo.

The protein localises to the nucleus. Its function is as follows. Transcription factor. Interacts, when in complex with WRKY71, specifically with the W box (5'-(T)TGAC[CT]-3'), a frequently occurring elicitor-responsive cis-acting element. Represses specifically gibberellic acid (GA)-induced promoters in aleurone cells, probably by interfering with GAM1. The polypeptide is WRKY transcription factor WRKY51 (Oryza sativa subsp. indica (Rice)).